A 250-amino-acid polypeptide reads, in one-letter code: Proteasome subunit alpha type-4-2 (250 aa).

As to quaternary structure, the 26S proteasome consists of a 20S proteasome core and two 19S regulatory subunits. The 20S proteasome core is composed of 28 subunits that are arranged in four stacked rings, resulting in a barrel-shaped structure. The two end rings are each formed by seven alpha subunits, and the two central rings are each formed by seven beta subunits. The catalytic chamber with the active sites is on the inside of the barrel.

It is found in the cytoplasm. It localises to the nucleus. Its function is as follows. The proteasome is a multicatalytic proteinase complex which is characterized by its ability to cleave peptides with Arg, Phe, Tyr, Leu, and Glu adjacent to the leaving group at neutral or slightly basic pH. The proteasome has an ATP-dependent proteolytic activity. The polypeptide is Proteasome subunit alpha type-4-2 (Oryza sativa subsp. indica (Rice)).